The following is a 195-amino-acid chain: SPbeta prophage-derived uncharacterized protein YotM (195 aa).

This is SPbeta prophage-derived uncharacterized protein YotM (yotM) from Bacillus subtilis (strain 168).